Reading from the N-terminus, the 216-residue chain is tRNA (guanine-N(7)-)-methyltransferase (216 aa).

Positions 43, 68, 95, and 117 each coordinate S-adenosyl-L-methionine. Substrate contacts are provided by residues D153 and 190–193 (TEYE).

The protein belongs to the class I-like SAM-binding methyltransferase superfamily. TrmB family.

The enzyme catalyses guanosine(46) in tRNA + S-adenosyl-L-methionine = N(7)-methylguanosine(46) in tRNA + S-adenosyl-L-homocysteine. The protein operates within tRNA modification; N(7)-methylguanine-tRNA biosynthesis. Its function is as follows. Catalyzes the formation of N(7)-methylguanine at position 46 (m7G46) in tRNA. This is tRNA (guanine-N(7)-)-methyltransferase from Desulfitobacterium hafniense (strain Y51).